Here is a 53-residue protein sequence, read N- to C-terminus: Gene 87 protein (53 aa).

The polypeptide is Gene 87 protein (87) (Mycobacterium phage L5 (Mycobacteriophage L5)).